We begin with the raw amino-acid sequence, 336 residues long: Phosphoribosylformylglycinamidine cyclo-ligase (336 aa).

It belongs to the AIR synthase family.

Its subcellular location is the cytoplasm. The catalysed reaction is 2-formamido-N(1)-(5-O-phospho-beta-D-ribosyl)acetamidine + ATP = 5-amino-1-(5-phospho-beta-D-ribosyl)imidazole + ADP + phosphate + H(+). It functions in the pathway purine metabolism; IMP biosynthesis via de novo pathway; 5-amino-1-(5-phospho-D-ribosyl)imidazole from N(2)-formyl-N(1)-(5-phospho-D-ribosyl)glycinamide: step 2/2. The polypeptide is Phosphoribosylformylglycinamidine cyclo-ligase (Thermoanaerobacter pseudethanolicus (strain ATCC 33223 / 39E) (Clostridium thermohydrosulfuricum)).